The primary structure comprises 184 residues: UPF0398 protein BCB4264_A1614 (184 aa).

The protein belongs to the UPF0398 family.

The polypeptide is UPF0398 protein BCB4264_A1614 (Bacillus cereus (strain B4264)).